Reading from the N-terminus, the 327-residue chain is o-succinylbenzoate synthase (327 aa).

Residue Lys110 is the Proton donor of the active site. Positions 138, 165, and 188 each coordinate Mg(2+). Lys212 (proton acceptor) is an active-site residue.

This sequence belongs to the mandelate racemase/muconate lactonizing enzyme family. MenC type 1 subfamily. It depends on a divalent metal cation as a cofactor.

It catalyses the reaction (1R,6R)-6-hydroxy-2-succinyl-cyclohexa-2,4-diene-1-carboxylate = 2-succinylbenzoate + H2O. The protein operates within quinol/quinone metabolism; 1,4-dihydroxy-2-naphthoate biosynthesis; 1,4-dihydroxy-2-naphthoate from chorismate: step 4/7. It participates in quinol/quinone metabolism; menaquinone biosynthesis. In terms of biological role, converts 2-succinyl-6-hydroxy-2,4-cyclohexadiene-1-carboxylate (SHCHC) to 2-succinylbenzoate (OSB). The protein is o-succinylbenzoate synthase of Mycobacterium ulcerans (strain Agy99).